Consider the following 190-residue polypeptide: Thiamine biosynthesis protein X (190 aa).

A signal peptide spans 1–22; the sequence is MSISRTVFGIAATAALSAALVA. C23 is lipidated: N-palmitoyl cysteine. The S-diacylglycerol cysteine moiety is linked to residue C23. A disordered region spans residues 43 to 68; the sequence is SQNPTSASSTSTSSATTTSSAPVEED. Low complexity predominate over residues 47–63; it reads TSASSTSTSSATTTSSA.

The protein resides in the cell membrane. In terms of biological role, is necessary for biosynthesis of the 4-methyl-5-(beta-hydroxyethyl)thiazol component from which thiamine is formed. The sequence is that of Thiamine biosynthesis protein X (thiX) from Corynebacterium glutamicum (strain ATCC 13032 / DSM 20300 / JCM 1318 / BCRC 11384 / CCUG 27702 / LMG 3730 / NBRC 12168 / NCIMB 10025 / NRRL B-2784 / 534).